We begin with the raw amino-acid sequence, 593 residues long: ATPase family AAA domain-containing protein 3-B (593 aa).

3 disordered regions span residues 1-64 (MSWL…LDQS), 109-129 (EEKR…AQYQ), and 145-164 (QLQN…KQEA). Residues 1-242 (MSWLFGLNRG…FRTFISDWDK (242 aa)) lie on the Mitochondrial intermembrane side of the membrane. Residues 12–27 (PEPPGVPGFPEPPSPP) show a composition bias toward pro residues. Basic and acidic residues-rich tracts occupy residues 33–44 (GGDKNRPKDKWS), 53–64 (RAAKAARELDQS), 109–121 (EEKR…ETKQ), and 150–164 (ENLR…KQEA). A coiled-coil region spans residues 51-215 (LERAAKAARE…QIRLKAAEHR (165 aa)). The helical transmembrane segment at 243–260 (VTATVAGLTLLAVGVYTA) threads the bilayer. Topologically, residues 261–593 (KNGTGVAGRY…LQPLLEGTPV (333 aa)) are mitochondrial matrix. Position 348-355 (348-355 (GPPGTGKT)) interacts with ATP. The span at 570–580 (AEGKESTKEIG) shows a compositional bias: basic and acidic residues. Positions 570 to 593 (AEGKESTKEIGKNPLQPLLEGTPV) are disordered.

It belongs to the AAA ATPase family. In terms of assembly, can form homooligomers. Homodimer formation at the N-terminus may be regulated by ATP and is required for the interaction with the inner surface of the mitochondrial outer membrane and correct mitochondrial homeostasis.

The protein resides in the mitochondrion inner membrane. It localises to the mitochondrion matrix. It is found in the mitochondrion nucleoid. The catalysed reaction is ATP + H2O = ADP + phosphate + H(+). Functionally, essential for mitochondrial network organization, mitochondrial metabolism and cell growth at organism and cellular level. May play an important role in mitochondrial protein synthesis. May also participate in mitochondrial DNA replication. May bind to mitochondrial DNA D-loops and contribute to nucleoid stability. Required for enhanced channeling of cholesterol for hormone-dependent steroidogenesis. Involved in mitochondrial-mediated antiviral innate immunity. Required to protect mitochondria from the PERK-mediated unfolded protein response: specifically inhibits the activity of EIF2AK3/PERK at mitochondria-endoplasmic reticulum contact sites, thereby providing a safe haven for mitochondrial protein translation during endoplasmic reticulum stress. Ability to inhibit EIF2AK3/PERK is independent of its ATPase activity. Also involved in the mitochondrial DNA damage response by promoting signaling between damaged genomes and the mitochondrial membrane, leading to activation of the integrated stress response (ISR). The protein is ATPase family AAA domain-containing protein 3-B (atad3-b) of Xenopus laevis (African clawed frog).